Here is a 249-residue protein sequence, read N- to C-terminus: Expansin-A19 (249 aa).

Positions 1–21 (MGNIFLQLLAVVALCIAPARS) are cleaved as a signal peptide. In terms of domain architecture, Expansin-like EG45 spans 41–154 (GGACGYGNLY…QQVKCWRYGG (114 aa)). 2 N-linked (GlcNAc...) asparagine glycosylation sites follow: Asn-116 and Asn-216. Residues 164–243 (YFELVLVTNM…GWSFGQTFST (80 aa)) form the Expansin-like CBD domain.

It belongs to the expansin family. Expansin A subfamily.

It localises to the secreted. The protein localises to the cell wall. It is found in the membrane. May cause loosening and extension of plant cell walls by disrupting non-covalent bonding between cellulose microfibrils and matrix glucans. No enzymatic activity has been found. May be required for rapid internodal elongation in deepwater rice during submergence. The sequence is that of Expansin-A19 (EXPA19) from Oryza sativa subsp. japonica (Rice).